Here is a 525-residue protein sequence, read N- to C-terminus: Protein shisa-6 (525 aa).

The signal sequence occupies residues 1 to 30; sequence MALRRLLLPPLLLSLLLSLASLHLPPGADA. Over 31–180 the chain is Extracellular; that stretch reads ARGRSGNRTL…NKYDPEKDKT (150 aa). Residues asparagine 37 and asparagine 62 are each glycosylated (N-linked (GlcNAc...) asparagine). The helical transmembrane segment at 181–201 threads the bilayer; that stretch reads NFTVYITCGVIAFVIVAGVFA. Topologically, residues 202–525 are cytoplasmic; that stretch reads KVSYDKAHRP…YTASKTEVTV (324 aa). A disordered region spans residues 241 to 294; the sequence is ISAIDTSPKENTPVRSTSKNHYTPVRTAKQTPGDRQYNHPILSSATQTPTHEKP. Residues 243–261 show a composition bias toward polar residues; that stretch reads AIDTSPKENTPVRSTSKNH. 3 positions are modified to phosphoserine: serine 416, serine 422, and serine 434. At threonine 458 the chain carries Phosphothreonine. The segment at 469-495 is disordered; that stretch reads MHSHPSASNNSYATLGQSQTAAKRHAF. The span at 473–489 shows a compositional bias: polar residues; the sequence is PSASNNSYATLGQSQTA. Threonine 502 is modified (phosphothreonine). Residues 522–525 carry the PDZ-binding motif; that stretch reads EVTV.

Belongs to the shisa family. Component of the postsynaptic hippocampal AMPA-type glutamate receptor (AMPAR) complex, at least composed of pore forming AMPAR subunits GRIA1, GRIA2 and GRIA3 and AMPAR auxiliary proteins SHISA6 and SHISA7. Interacts (via PDZ-binding motif) with DLG4/PSD-95 (via PDZ domain); the interaction is direct. In terms of processing, N-glycosylated. Highly expressed in cerebellum and hippocampal neurons: CA1 stratum oriens and stratum radiatum, CA3 stratum oriens and stratum lucidum, and the dentate gyrus polymorphic layer. Expressed in other brain structures including olfactory bulb, cortex, amygdala and midbrain (at protein level). Also expressed in a subset of spermatogonial stem cells. Also expressed in eye, heart, kidney, lung, muscle and spleen. Isoform 2: Specifically expressed in hippocampus.

Its subcellular location is the postsynaptic density membrane. Its function is as follows. Involved in maintenance of high-frequency synaptic transmission at hippocampal CA3-CA1 synapses. Regulates AMPA-type glutamate receptor (AMPAR) immobilization at postsynaptic density keeping the channels in an activated state in the presence of glutamate and preventing synaptic depression. May play a role in self-renewal and differentiation of spermatogonial stem cells by inhibiting canonical Wnt signaling pathway. This Mus musculus (Mouse) protein is Protein shisa-6.